We begin with the raw amino-acid sequence, 415 residues long: MKLLHSIKAHDDKVWSLSSHPTLPLLATASTDKCSNIYRLSCSNASSSSSSSSPPSPPSPPSSSSPRRNFPQIAHLEDTHRRSVRSVSFKPPMGGIDHQDSNILDLPALASGSFDSTISIWGIDEPDDDNTYEIEEIIANQKEFLASPGNEWNLMAVIEGHENEIKAVDWNFSGRYLASCSRDKTVWIWETDPETLEEFECVAVLTDHTQDVKHVTWHPTRNLLASSSYDDTIRVYKQEFDDDEWSCVGMIDGHEGTVWCSKFESPKSPKAKDGTTRLVSVSDDLSARVWASKDNTGFNGGSEQLQSQSQTHLPSSIRHNAEEMVWEQESTLPQIHTHAIYSVAWSSSSGKIATAGSDGRIVVYKETNAGWEVENIQESAHGVYEINCVIWAKLDLDQEVLISGGDDGNVNIWEV.

The stretch at 9–48 (AHDDKVWSLSSHPTLPLLATASTDKCSNIYRLSCSNASSS) is one WD 1 repeat. The tract at residues 45–70 (ASSSSSSSSPPSPPSPPSSSSPRRNF) is disordered. Pro residues predominate over residues 54-63 (PPSPPSPPSS). 6 WD repeats span residues 79–131 (THRR…DDNT), 160–200 (GHEN…EEFE), 207–246 (DHTQ…DEWS), 253–300 (GHEG…GFNG), 335–374 (IHTH…WEVE), and 380–415 (AHGV…IWEV).

This sequence belongs to the WD repeat CIA1 family. As to quaternary structure, interacts with NAR1.

Its subcellular location is the cytoplasm. It is found in the nucleus. Essential component of the cytosolic iron-sulfur (Fe/S) protein assembly machinery. Required for the maturation of extramitochondrial Fe/S proteins. This is Probable cytosolic iron-sulfur protein assembly protein 1 from Lodderomyces elongisporus (strain ATCC 11503 / CBS 2605 / JCM 1781 / NBRC 1676 / NRRL YB-4239) (Yeast).